A 381-amino-acid polypeptide reads, in one-letter code: 1-deoxy-D-xylulose 5-phosphate reductoisomerase (381 aa).

NADPH contacts are provided by Thr-11, Gly-12, Ser-13, Ile-14, Asn-37, and Asn-121. Position 122 (Lys-122) interacts with 1-deoxy-D-xylulose 5-phosphate. Glu-123 is a binding site for NADPH. Asp-147 lines the Mn(2+) pocket. The 1-deoxy-D-xylulose 5-phosphate site is built by Ser-148, Glu-149, Ser-173, and His-196. Residue Glu-149 participates in Mn(2+) binding. Residue Gly-202 participates in NADPH binding. Positions 209, 214, 215, and 218 each coordinate 1-deoxy-D-xylulose 5-phosphate. Glu-218 serves as a coordination point for Mn(2+).

Belongs to the DXR family. Mg(2+) serves as cofactor. Requires Mn(2+) as cofactor.

It carries out the reaction 2-C-methyl-D-erythritol 4-phosphate + NADP(+) = 1-deoxy-D-xylulose 5-phosphate + NADPH + H(+). It functions in the pathway isoprenoid biosynthesis; isopentenyl diphosphate biosynthesis via DXP pathway; isopentenyl diphosphate from 1-deoxy-D-xylulose 5-phosphate: step 1/6. Functionally, catalyzes the NADPH-dependent rearrangement and reduction of 1-deoxy-D-xylulose-5-phosphate (DXP) to 2-C-methyl-D-erythritol 4-phosphate (MEP). This chain is 1-deoxy-D-xylulose 5-phosphate reductoisomerase, found in Ruminiclostridium cellulolyticum (strain ATCC 35319 / DSM 5812 / JCM 6584 / H10) (Clostridium cellulolyticum).